A 257-amino-acid polypeptide reads, in one-letter code: Imidazole glycerol phosphate synthase subunit HisF (257 aa).

Catalysis depends on residues Asp-11 and Asp-130.

This sequence belongs to the HisA/HisF family. In terms of assembly, heterodimer of HisH and HisF.

It is found in the cytoplasm. It catalyses the reaction 5-[(5-phospho-1-deoxy-D-ribulos-1-ylimino)methylamino]-1-(5-phospho-beta-D-ribosyl)imidazole-4-carboxamide + L-glutamine = D-erythro-1-(imidazol-4-yl)glycerol 3-phosphate + 5-amino-1-(5-phospho-beta-D-ribosyl)imidazole-4-carboxamide + L-glutamate + H(+). It functions in the pathway amino-acid biosynthesis; L-histidine biosynthesis; L-histidine from 5-phospho-alpha-D-ribose 1-diphosphate: step 5/9. IGPS catalyzes the conversion of PRFAR and glutamine to IGP, AICAR and glutamate. The HisF subunit catalyzes the cyclization activity that produces IGP and AICAR from PRFAR using the ammonia provided by the HisH subunit. This is Imidazole glycerol phosphate synthase subunit HisF from Aeromonas salmonicida (strain A449).